The primary structure comprises 380 residues: Protein trichome birefringence-like 38 (380 aa).

A helical; Signal-anchor for type II membrane protein membrane pass occupies residues 7–29 (SLLLLFLPLLTVTILSGVEQAFA). The GDS motif signature appears at 134-136 (GDS). A DCXHWCLPGXXDXWN motif motif is present at residues 357–371 (DCSHWCLPGLPDTWN).

Belongs to the PC-esterase family. TBL subfamily.

The protein localises to the membrane. Functionally, may act as a bridging protein that binds pectin and other cell wall polysaccharides. Probably involved in maintaining esterification of pectins. May be involved in the specific O-acetylation of cell wall polymers. This chain is Protein trichome birefringence-like 38 (TBL38), found in Arabidopsis thaliana (Mouse-ear cress).